Here is a 262-residue protein sequence, read N- to C-terminus: Inner membrane protein YcfZ (262 aa).

The Cytoplasmic portion of the chain corresponds to 1–4 (MKKF). The helical transmembrane segment at 5–27 (IILLSLLILLPLTAASKPLIPIM) threads the bilayer. Over 28-182 (KTLFTDVTGT…HENAPPGSTN (155 aa)) the chain is Periplasmic. The helical transmembrane segment at 183 to 202 (TLGFIAWAATFILFSRIFYY) threads the bilayer. Over 203–206 (TTRF) the chain is Cytoplasmic. A helical transmembrane segment spans residues 207 to 229 (IYALKFAVAMTIANMGYQALCLY). At 230–238 (IDNSFAITR) the chain is on the periplasmic side. A helical membrane pass occupies residues 239–258 (ISPLWAGLIGVCTFIAALLL). Residues 259-262 (TSKR) lie on the Cytoplasmic side of the membrane.

The protein localises to the cell inner membrane. This chain is Inner membrane protein YcfZ (ycfZ), found in Escherichia coli (strain K12).